Reading from the N-terminus, the 159-residue chain is U1 small nuclear ribonucleoprotein C (159 aa).

The Matrin-type zinc-finger motif lies at 4 to 36 (FYCDYCDTYLTHDSPSVRKTHCSGRKHKENVKD). 2 disordered regions span residues 63 to 95 (PPTPFAAPPAGSAMIPPPPSMGGPPRPGMMPAP) and 139 to 159 (MRPPTRPMMLQSRPGMARPDR). Residues 77 to 95 (IPPPPSMGGPPRPGMMPAP) show a composition bias toward pro residues.

Belongs to the U1 small nuclear ribonucleoprotein C family. Component of the U1 snRNP. The U1 snRNP is composed of the U1 snRNA and the 7 core Sm proteins snrpb, snrpd1, snrpd2, snrpd3, snrpe, snrpf and snrpg that assemble in a heptameric protein ring on the Sm site of the small nuclear RNA to form the core snRNP, and at least 3 U1 snRNP-specific proteins snrnp70/U1-70K, snrpa/U1-A and snrpc/U1-C. snrpc/U1-C interacts with U1 snRNA and the 5' splice-site region of the pre-mRNA.

The protein localises to the nucleus. In terms of biological role, component of the spliceosomal U1 snRNP, which is essential for recognition of the pre-mRNA 5' splice-site and the subsequent assembly of the spliceosome. snrpc/U1-C is directly involved in initial 5' splice-site recognition for both constitutive and regulated alternative splicing. The interaction with the 5' splice-site seems to precede base-pairing between the pre-mRNA and the U1 snRNA. Stimulates commitment or early (E) complex formation by stabilizing the base pairing of the 5' end of the U1 snRNA and the 5' splice-site region. The sequence is that of U1 small nuclear ribonucleoprotein C from Xenopus tropicalis (Western clawed frog).